Here is a 383-residue protein sequence, read N- to C-terminus: ERCC4 domain-containing protein EP364R (383 aa).

Positions Phe3–Ala101 constitute an ERCC4 domain. The interval Leu336–Thr367 is disordered. Residues Ala347 to Ser356 show a composition bias toward basic and acidic residues. The segment covering Asp357–Thr367 has biased composition (polar residues).

It belongs to the asfivirus EP364R family.

Its function is as follows. Plays a role in the inhibition of type I interferon signaling pathway. Mechanistically, specifically interacts with 2',3'-cGAMP and cleaves it via its phosphodiesterase activity. In turn, prevents 2',3'-cGAMP interaction with host ER-resident STING1 leading to inhibition of downstream signaling pathway and type I interferon production. This chain is ERCC4 domain-containing protein EP364R, found in Ornithodoros (relapsing fever ticks).